The sequence spans 76 residues: MLYPPLNQLTSKVSSKYLIATVAAKRARELYDKPETALLEHYHSVKTVGKALEEIAAGKITPIEPELNESEFETKD.

It belongs to the RNA polymerase subunit omega family. As to quaternary structure, the RNAP catalytic core consists of 2 alpha, 1 beta, 1 beta' and 1 omega subunit. When a sigma factor is associated with the core the holoenzyme is formed, which can initiate transcription.

The catalysed reaction is RNA(n) + a ribonucleoside 5'-triphosphate = RNA(n+1) + diphosphate. Promotes RNA polymerase assembly. Latches the N- and C-terminal regions of the beta' subunit thereby facilitating its interaction with the beta and alpha subunits. This is DNA-directed RNA polymerase subunit omega from Staphylococcus carnosus (strain TM300).